Here is a 589-residue protein sequence, read N- to C-terminus: Arylsulfatase L (589 aa).

A signal peptide spans 1–31 (MLHLHHSCLCFRSWLPAMLAVLLSLAPSASS). Residues D46 and D47 each coordinate Ca(2+). The N-linked (GlcNAc...) asparagine glycan is linked to N58. Residue C86 participates in Ca(2+) binding. C86 acts as the Nucleophile in catalysis. C86 is subject to 3-oxoalanine (Cys). The N-linked (GlcNAc...) asparagine glycan is linked to N125. Residue K145 coordinates substrate. The active site involves H147. N258 carries an N-linked (GlcNAc...) asparagine glycan. Substrate is bound at residue H301. Residue N344 is glycosylated (N-linked (GlcNAc...) asparagine). 2 residues coordinate Ca(2+): D353 and H354. Residue K378 coordinates substrate.

This sequence belongs to the sulfatase family. Ca(2+) is required as a cofactor. In terms of processing, N-glycosylated. The conversion to 3-oxoalanine (also known as C-formylglycine, FGly), of a serine or cysteine residue in prokaryotes and of a cysteine residue in eukaryotes, is critical for catalytic activity. As to expression, expressed in the pancreas, liver and kidney.

Its subcellular location is the golgi apparatus. It is found in the golgi stack. The enzyme catalyses an aryl sulfate + H2O = a phenol + sulfate + H(+). With respect to regulation, inhibited by millimolar concentrations of warfarin. Functionally, exhibits arylsulfatase activity towards the artificial substrate 4-methylumbelliferyl sulfate. May be essential for the correct composition of cartilage and bone matrix during development. Has no activity toward steroid sulfates. In Homo sapiens (Human), this protein is Arylsulfatase L.